The primary structure comprises 177 residues: Nucleoside triphosphate/diphosphate phosphatase (177 aa).

Arg-23 (proton donor) is an active-site residue. Positions 87, 103, 105, 107, 120, and 123 each coordinate Mg(2+).

Belongs to the Ntdp family. It depends on Mg(2+) as a cofactor.

It catalyses the reaction a ribonucleoside 5'-triphosphate + H2O = a ribonucleoside 5'-diphosphate + phosphate + H(+). It carries out the reaction a ribonucleoside 5'-diphosphate + H2O = a ribonucleoside 5'-phosphate + phosphate + H(+). Has nucleoside phosphatase activity towards nucleoside triphosphates and nucleoside diphosphates. In Streptococcus pneumoniae serotype 19F (strain G54), this protein is Nucleoside triphosphate/diphosphate phosphatase.